The chain runs to 674 residues: Membrane-anchored lipid-binding protein LAM5 (674 aa).

Disordered stretches follow at residues M1–E52 and N65–L151. Over M1 to M633 the chain is Cytoplasmic. Residues A69–S81 show a composition bias toward basic and acidic residues. Over residues R82–S119 the composition is skewed to low complexity. T110 is modified (phosphothreonine). Residues S113 and S140 each carry the phosphoserine modification. T143 is subject to Phosphothreonine. Position 149 is a phosphoserine (S149). One can recognise a GRAM domain in the interval K198 to T264. Residues I336–N357 show a composition bias toward acidic residues. Residues I336–Y380 are disordered. The segment covering I358 to S371 has biased composition (low complexity). Residues N409–V582 enclose the VASt domain. The helical transmembrane segment at E634–I654 threads the bilayer. Residues R655–L674 lie on the Lumenal side of the membrane.

It belongs to the YSP2 family.

It is found in the endoplasmic reticulum membrane. In terms of biological role, may be involved in sterol transfer between intracellular membranes. The protein is Membrane-anchored lipid-binding protein LAM5 of Saccharomyces cerevisiae (strain ATCC 204508 / S288c) (Baker's yeast).